Here is a 250-residue protein sequence, read N- to C-terminus: 5'-nucleotidase SurE (250 aa).

The a divalent metal cation site is built by Asp8, Asp9, Ser39, and Asn91.

This sequence belongs to the SurE nucleotidase family. It depends on a divalent metal cation as a cofactor.

The protein resides in the cytoplasm. It carries out the reaction a ribonucleoside 5'-phosphate + H2O = a ribonucleoside + phosphate. In terms of biological role, nucleotidase that shows phosphatase activity on nucleoside 5'-monophosphates. In Leptospira borgpetersenii serovar Hardjo-bovis (strain L550), this protein is 5'-nucleotidase SurE.